The chain runs to 376 residues: Lipid-A-disaccharide synthase (376 aa).

It belongs to the LpxB family.

It catalyses the reaction a lipid X + a UDP-2-N,3-O-bis[(3R)-3-hydroxyacyl]-alpha-D-glucosamine = a lipid A disaccharide + UDP + H(+). The protein operates within bacterial outer membrane biogenesis; LPS lipid A biosynthesis. In terms of biological role, condensation of UDP-2,3-diacylglucosamine and 2,3-diacylglucosamine-1-phosphate to form lipid A disaccharide, a precursor of lipid A, a phosphorylated glycolipid that anchors the lipopolysaccharide to the outer membrane of the cell. The chain is Lipid-A-disaccharide synthase from Hydrogenovibrio crunogenus (strain DSM 25203 / XCL-2) (Thiomicrospira crunogena).